Reading from the N-terminus, the 211-residue chain is tRNA (pseudouridine(54)-N(1))-methyltransferase (211 aa).

Residues Leu128, Gly150, and Cys183 each coordinate S-adenosyl-L-methionine.

Belongs to the methyltransferase superfamily. TrmY family. Homodimer.

It localises to the cytoplasm. It catalyses the reaction pseudouridine(54) in tRNA + S-adenosyl-L-methionine = N(1)-methylpseudouridine(54) in tRNA + S-adenosyl-L-homocysteine + H(+). Functionally, specifically catalyzes the N1-methylation of pseudouridine at position 54 (Psi54) in tRNAs. The protein is tRNA (pseudouridine(54)-N(1))-methyltransferase of Methanosarcina acetivorans (strain ATCC 35395 / DSM 2834 / JCM 12185 / C2A).